A 505-amino-acid polypeptide reads, in one-letter code: ATP synthase subunit alpha (505 aa).

170–177 (GDRQTGKT) lines the ATP pocket.

It belongs to the ATPase alpha/beta chains family. As to quaternary structure, F-type ATPases have 2 components, CF(1) - the catalytic core - and CF(0) - the membrane proton channel. CF(1) has five subunits: alpha(3), beta(3), gamma(1), delta(1), epsilon(1). CF(0) has four main subunits: a(1), b(1), b'(1) and c(9-12).

The protein resides in the cellular thylakoid membrane. It catalyses the reaction ATP + H2O + 4 H(+)(in) = ADP + phosphate + 5 H(+)(out). Functionally, produces ATP from ADP in the presence of a proton gradient across the membrane. The alpha chain is a regulatory subunit. The polypeptide is ATP synthase subunit alpha (Synechococcus sp. (strain ATCC 27144 / PCC 6301 / SAUG 1402/1) (Anacystis nidulans)).